The following is a 940-amino-acid chain: Glutamate receptor 2.9 (940 aa).

An N-terminal signal peptide occupies residues 1–23 (MKTNNTFLSYFVCGFLLMGVGLG). Residues 24-566 (QNQTSEIKVG…DTWVFLEPWS (543 aa)) lie on the Extracellular side of the membrane. N-linked (GlcNAc...) asparagine glycosylation is found at N25, N39, N115, N338, N345, and N528. A helical membrane pass occupies residues 567 to 587 (LELWVTTGCFFVFIGFVVWLF). Residues 588–596 (EHRVNTDFR) lie on the Cytoplasmic side of the membrane. Residues 597–617 (GPPQYQIGTSLWFSFSTMVFA) traverse the membrane as a helical segment. Residues 618-628 (HRENVVSNLAR) lie on the Cytoplasmic side of the membrane. A helical transmembrane segment spans residues 629–649 (FVVVVWCFVVLVLTQSYTASL). Residues 650–811 (TSFLTVQSLQ…NRLNLSSFLG (162 aa)) are Extracellular-facing. 3 N-linked (GlcNAc...) asparagine glycosylation sites follow: N771, N776, and N805. Residues 812–832 (LFLIAGTAISFSLLVFVALFL) traverse the membrane as a helical segment. Over 833-940 (YEHRHTLGDD…ESDIECRVEQ (108 aa)) the chain is Cytoplasmic. Disordered stretches follow at residues 876-900 (ISSPMTHKTPSPSTVQITPWPQSPS) and 914-940 (PSEERFTTQPIIHHEDGESDIECRVEQ).

It belongs to the glutamate-gated ion channel (TC 1.A.10.1) family. May form heteromers. Expressed predominantly in roots.

It is found in the membrane. In terms of biological role, glutamate-gated receptor that probably acts as a non-selective cation channel. May be involved in light-signal transduction and calcium homeostasis via the regulation of calcium influx into cells. This chain is Glutamate receptor 2.9 (GLR2.9), found in Arabidopsis thaliana (Mouse-ear cress).